Consider the following 136-residue polypeptide: Nucleoside diphosphate kinase (136 aa).

Positions 9, 57, 85, 91, 102, and 112 each coordinate ATP. The active-site Pros-phosphohistidine intermediate is the His-115.

This sequence belongs to the NDK family. Homotetramer. Requires Mg(2+) as cofactor.

It localises to the cytoplasm. It catalyses the reaction a 2'-deoxyribonucleoside 5'-diphosphate + ATP = a 2'-deoxyribonucleoside 5'-triphosphate + ADP. The enzyme catalyses a ribonucleoside 5'-diphosphate + ATP = a ribonucleoside 5'-triphosphate + ADP. Its function is as follows. Major role in the synthesis of nucleoside triphosphates other than ATP. The ATP gamma phosphate is transferred to the NDP beta phosphate via a ping-pong mechanism, using a phosphorylated active-site intermediate. The sequence is that of Nucleoside diphosphate kinase from Acetivibrio thermocellus (strain ATCC 27405 / DSM 1237 / JCM 9322 / NBRC 103400 / NCIMB 10682 / NRRL B-4536 / VPI 7372) (Clostridium thermocellum).